A 570-amino-acid polypeptide reads, in one-letter code: Proline--tRNA ligase (570 aa).

This sequence belongs to the class-II aminoacyl-tRNA synthetase family. ProS type 1 subfamily. Homodimer.

The protein localises to the cytoplasm. The enzyme catalyses tRNA(Pro) + L-proline + ATP = L-prolyl-tRNA(Pro) + AMP + diphosphate. Its function is as follows. Catalyzes the attachment of proline to tRNA(Pro) in a two-step reaction: proline is first activated by ATP to form Pro-AMP and then transferred to the acceptor end of tRNA(Pro). As ProRS can inadvertently accommodate and process non-cognate amino acids such as alanine and cysteine, to avoid such errors it has two additional distinct editing activities against alanine. One activity is designated as 'pretransfer' editing and involves the tRNA(Pro)-independent hydrolysis of activated Ala-AMP. The other activity is designated 'posttransfer' editing and involves deacylation of mischarged Ala-tRNA(Pro). The misacylated Cys-tRNA(Pro) is not edited by ProRS. The protein is Proline--tRNA ligase of Clostridium perfringens (strain ATCC 13124 / DSM 756 / JCM 1290 / NCIMB 6125 / NCTC 8237 / Type A).